A 280-amino-acid chain; its full sequence is Urease accessory protein UreD (280 aa).

It belongs to the UreD family. As to quaternary structure, ureD, UreF and UreG form a complex that acts as a GTP-hydrolysis-dependent molecular chaperone, activating the urease apoprotein by helping to assemble the nickel containing metallocenter of UreC. The UreE protein probably delivers the nickel.

Its subcellular location is the cytoplasm. Its function is as follows. Required for maturation of urease via the functional incorporation of the urease nickel metallocenter. In Staphylococcus saprophyticus subsp. saprophyticus (strain ATCC 15305 / DSM 20229 / NCIMB 8711 / NCTC 7292 / S-41), this protein is Urease accessory protein UreD.